A 93-amino-acid polypeptide reads, in one-letter code: Putative regulatory protein Amet_2791 (93 aa).

The protein belongs to the RemA family.

In Alkaliphilus metalliredigens (strain QYMF), this protein is Putative regulatory protein Amet_2791.